A 208-amino-acid polypeptide reads, in one-letter code: Uracil phosphoribosyltransferase (208 aa).

Residues arginine 78, arginine 103, and 130-138 (DPMLATGGS) contribute to the 5-phospho-alpha-D-ribose 1-diphosphate site. Uracil is bound by residues isoleucine 193 and 198–200 (GDA). Aspartate 199 is a 5-phospho-alpha-D-ribose 1-diphosphate binding site.

It belongs to the UPRTase family. Requires Mg(2+) as cofactor.

It catalyses the reaction UMP + diphosphate = 5-phospho-alpha-D-ribose 1-diphosphate + uracil. It functions in the pathway pyrimidine metabolism; UMP biosynthesis via salvage pathway; UMP from uracil: step 1/1. With respect to regulation, allosterically activated by GTP. Its function is as follows. Catalyzes the conversion of uracil and 5-phospho-alpha-D-ribose 1-diphosphate (PRPP) to UMP and diphosphate. In Neisseria meningitidis serogroup B (strain ATCC BAA-335 / MC58), this protein is Uracil phosphoribosyltransferase.